The following is a 452-amino-acid chain: Plasmepsin I (452 aa).

Residues 1–37 lie on the Cytoplasmic side of the membrane; the sequence is MALSIKEDFSSAFAKNESAVNSSTFNNNMKTWKIQKR. Positions 1-123 are excised as a propeptide; that stretch reads MALSIKEDFS…TGLTQKPHLG (123 aa). The chain crosses the membrane as a helical; Signal-anchor for type II membrane protein span at residues 38 to 58; the sequence is FQILYVFFFLLITGALFYYLI. The Lumenal portion of the chain corresponds to 59–452; it reads DNVLFPKNKK…VGFALAKKKL (394 aa). The region spanning 139–446 is the Peptidase A1 domain; the sequence is YYGEAQIGDN…DYDNHTVGFA (308 aa). Residue aspartate 157 is part of the active site. A disulfide bond links cysteine 170 and cysteine 175. Aspartate 337 is a catalytic residue. Cysteine 372 and cysteine 408 are joined by a disulfide.

This sequence belongs to the peptidase A1 family. Not N-glycosylated. Post-translationally, proteolytically cleaved into the soluble active mature form in the digestive vacuole by cysteine protease falcipains; the process begins at the early ring stage. Proteolysis requires an acidic environment.

It is found in the membrane. Its subcellular location is the vacuole lumen. It localises to the vacuole membrane. The enzyme catalyses Hydrolysis of the 33-Phe-|-Leu-34 bond in the alpha-chain of hemoglobin, leading to denaturation of molecule.. Its activity is regulated as follows. Inhibited by KNI derived compounds KNI-10333 and to a lesser extent KNI-10743. Its function is as follows. During the asexual blood stage, catalyzes the initial cleavage of native host hemoglobin (Hb) resulting in Hb denaturation; specifically cleaves between Phe-33 and Leu-34 of Hb alpha-chain. Digestion of host Hb is an essential step which provides the parasite with amino acids for protein synthesis, and regulates osmolarity. The sequence is that of Plasmepsin I from Plasmodium falciparum (isolate 3D7).